Consider the following 491-residue polypeptide: MKKELLKLSILEAHNCLKRKEFSPTELVEAYIDEMENENLNAFVTKTQDIALEQARKVENLLLQGEKISPLAGMPIGVKDLFCTAGVRTTACSDILKNFVPSYESTISQNLWNNNACMMGKLNMDEFAMGSASSYSCFGPVKNPWKGPYGEDLIPGGSSGGSSAAVAGRLCIAAIGSDTGGSVRQPAALCGIVGAKPTYGRCSRWGMIAFASSLDQAGVLTRTVEDAAIMLQAMCGHDKKDSTSSPVDVPDFLKHISYDIKGKRIGIVREYAIPENKERECVSEMWAANLKYLQDCGAEIVDISLHHTKYALPLYYVIASSEASSNLARYDGVRYGVRREGESIDDMYELTRSLNFGEEVKRRILIGAYALSYGCYDAYYDKSQRVRRRVMQDFDEAFKKVDCILTLTTPRNFIGMDEKLEMIDRYYSDVFTVPASLAGLPAISIPSGLTKHGLPMSLQVIGKHYDEGEIFNVAAVIHKRTGDLLKHLHHF.

Active-site charge relay system residues include Lys79 and Ser158. Ser182 functions as the Acyl-ester intermediate in the catalytic mechanism.

Belongs to the amidase family. GatA subfamily. In terms of assembly, heterotrimer of A, B and C subunits.

It carries out the reaction L-glutamyl-tRNA(Gln) + L-glutamine + ATP + H2O = L-glutaminyl-tRNA(Gln) + L-glutamate + ADP + phosphate + H(+). In terms of biological role, allows the formation of correctly charged Gln-tRNA(Gln) through the transamidation of misacylated Glu-tRNA(Gln) in organisms which lack glutaminyl-tRNA synthetase. The reaction takes place in the presence of glutamine and ATP through an activated gamma-phospho-Glu-tRNA(Gln). In Anaplasma phagocytophilum (strain HZ), this protein is Glutamyl-tRNA(Gln) amidotransferase subunit A.